We begin with the raw amino-acid sequence, 298 residues long: Inosose dehydratase (298 aa).

The protein belongs to the IolE/MocC family. Requires glutathione as cofactor. It depends on Co(2+) as a cofactor. Mn(2+) serves as cofactor.

The enzyme catalyses scyllo-inosose = 3D-3,5/4-trihydroxycyclohexane-1,2-dione + H2O. It participates in polyol metabolism; myo-inositol degradation into acetyl-CoA; acetyl-CoA from myo-inositol: step 2/7. Catalyzes the dehydration of inosose (2-keto-myo-inositol, 2KMI or 2,4,6/3,5-pentahydroxycyclohexanone) to 3D-(3,5/4)-trihydroxycyclohexane-1,2-dione (D-2,3-diketo-4-deoxy-epi-inositol). This is Inosose dehydratase from Bacillus cereus (strain AH820).